The sequence spans 316 residues: Pantothenate kinase (316 aa).

95-102 lines the ATP pocket; sequence GSVAVGKS.

It belongs to the prokaryotic pantothenate kinase family.

It localises to the cytoplasm. The enzyme catalyses (R)-pantothenate + ATP = (R)-4'-phosphopantothenate + ADP + H(+). It functions in the pathway cofactor biosynthesis; coenzyme A biosynthesis; CoA from (R)-pantothenate: step 1/5. This Escherichia coli O17:K52:H18 (strain UMN026 / ExPEC) protein is Pantothenate kinase.